We begin with the raw amino-acid sequence, 101 residues long: Small ribosomal subunit protein uS14 (101 aa).

It belongs to the universal ribosomal protein uS14 family. Part of the 30S ribosomal subunit. Contacts proteins S3 and S10.

Binds 16S rRNA, required for the assembly of 30S particles and may also be responsible for determining the conformation of the 16S rRNA at the A site. This is Small ribosomal subunit protein uS14 from Shewanella denitrificans (strain OS217 / ATCC BAA-1090 / DSM 15013).